We begin with the raw amino-acid sequence, 146 residues long: Transcriptional regulator MraZ (146 aa).

2 SpoVT-AbrB domains span residues 5–52 (SAAL…PRAE) and 81–124 (AAEI…KEES).

This sequence belongs to the MraZ family. In terms of assembly, forms oligomers.

The protein localises to the cytoplasm. The protein resides in the nucleoid. The polypeptide is Transcriptional regulator MraZ (Alcanivorax borkumensis (strain ATCC 700651 / DSM 11573 / NCIMB 13689 / SK2)).